Consider the following 275-residue polypeptide: Ribosomal RNA small subunit methyltransferase A (275 aa).

The S-adenosyl-L-methionine site is built by Asn27, Leu29, Gly54, Glu76, Asp102, and Asn123.

The protein belongs to the class I-like SAM-binding methyltransferase superfamily. rRNA adenine N(6)-methyltransferase family. RsmA subfamily.

The protein resides in the cytoplasm. It carries out the reaction adenosine(1518)/adenosine(1519) in 16S rRNA + 4 S-adenosyl-L-methionine = N(6)-dimethyladenosine(1518)/N(6)-dimethyladenosine(1519) in 16S rRNA + 4 S-adenosyl-L-homocysteine + 4 H(+). Specifically dimethylates two adjacent adenosines (A1518 and A1519) in the loop of a conserved hairpin near the 3'-end of 16S rRNA in the 30S particle. May play a critical role in biogenesis of 30S subunits. The chain is Ribosomal RNA small subunit methyltransferase A from Chelativorans sp. (strain BNC1).